We begin with the raw amino-acid sequence, 292 residues long: MASSMRSLFSDHGKYVESFRRFLNHSTEHQCMQEFMDKKLPGIIGRIGDTKSEIKILSIGGGAGEIDLQILSKVQAQYPGVCINNEVVEPSAEQIAKYKELVAKTSNLENVKFAWHKETSSEYQSRMLEKKELQKWDFIHMIQMLYYVKDIPATLKFFHSLLGTNAKMLIIVVSGSSGWDKLWKKYGSRFPQDDLCQYITSDDLTQMLDNLGLKYECYDLLSTMDISDCFIDGNENGDLLWDFLTETCNFNATAPPDLRAELGKDLQEPEFSAKKEGKVLFNNTLSFIVIEA.

A substrate-binding site is contributed by E28. S-adenosyl-L-methionine-binding residues include G60, E89, Q94, S120, and I142. N283 lines the substrate pocket.

It belongs to the class I-like SAM-binding methyltransferase superfamily. HNMT family. In terms of assembly, monomer.

Its subcellular location is the cytoplasm. It carries out the reaction histamine + S-adenosyl-L-methionine = N(tau)-methylhistamine + S-adenosyl-L-homocysteine + H(+). In terms of biological role, inactivates histamine by N-methylation. Plays an important role in degrading histamine and in regulating the airway response to histamine. This chain is Histamine N-methyltransferase (HNMT), found in Homo sapiens (Human).